Here is a 222-residue protein sequence, read N- to C-terminus: 7-cyano-7-deazaguanine synthase (222 aa).

F11 to L21 provides a ligand contact to ATP. Positions 187, 195, 198, and 201 each coordinate Zn(2+).

Belongs to the QueC family. Zn(2+) is required as a cofactor.

The enzyme catalyses 7-carboxy-7-deazaguanine + NH4(+) + ATP = 7-cyano-7-deazaguanine + ADP + phosphate + H2O + H(+). Its pathway is purine metabolism; 7-cyano-7-deazaguanine biosynthesis. In terms of biological role, catalyzes the ATP-dependent conversion of 7-carboxy-7-deazaguanine (CDG) to 7-cyano-7-deazaguanine (preQ(0)). The polypeptide is 7-cyano-7-deazaguanine synthase (Actinobacillus pleuropneumoniae serotype 3 (strain JL03)).